The primary structure comprises 107 residues: Insulin-like peptide 6 (107 aa).

The first 33 residues, 1–33, serve as a signal peptide directing secretion; it reads MVLKVPTSKVLLVLATLFAVAAMISSWMPQVAA. 3 cysteine pairs are disulfide-bonded: Cys-48-Cys-91, Cys-60-Cys-105, and Cys-90-Cys-96. The propeptide at 67-76 is connecting peptide; the sequence is LGDVFPNSFG.

The protein belongs to the insulin family. In terms of assembly, heterodimer of a B chain and an A chain linked by two disulfide bonds. In terms of tissue distribution, expressed at a low level in the larval gut.

The protein resides in the secreted. Functionally, possible ligand of InR/insulin-like receptor. In Drosophila melanogaster (Fruit fly), this protein is Insulin-like peptide 6.